The sequence spans 53 residues: MEIFIEVFSHFLLQLTELTLNMCLELPTGSLEKSLMISSQVLQIPVANSTKQR.

ACC-6 forms a complex with MHC HLA-B*4403. In terms of tissue distribution, highly expressed in dendritic cells and primary leukemia cells, especially those of myeloid lineage. ACC-6 expression is limited to cells of the hematopoietic lineage.

Its function is as follows. This splice variant of HMSD is the precursor of the histocompatibility antigen ACC-6. More generally, minor histocompatibility antigens (mHags) refer to immunogenic peptide which, when complexed with MHC, can generate an immune response after recognition by specific T-cells. The peptides are derived from polymorphic intracellular proteins, which are cleaved by normal pathways of antigen processing. The binding of these peptides to MHC class I or class II molecules and its expression on the cell surface can stimulate T-cell responses and thereby trigger graft rejection or graft-versus-host disease (GVHD) after hematopoietic stem cell transplantation from HLA-identical sibling donor. GVHD is a frequent complication after bone marrow transplantation (BMT), due to mismatch of minor histocompatibility antigen in HLA-matched sibling marrow transplants. However, associated with GVHD, a favorable graft-versus-leukemia (GVL) can be induced by donor-recipient disparities in mHags. ACC-6 is presented to the cell surface by MHC HLA-B*4403. This complex specifically elicits donor-cytotoxic T-lymphocyte (CTL) reactivity against hematologic malignancies after treatment by HLA-identical allogenic BMT. It induces cell recognition and lysis by CTL. Immunogenicity of most autosomal mHags results from single-nucleotide polymorphisms that cause amino-acid substitutions within epitopes, leading to the differential recognition of peptides between donor and recipient. This is Minor histocompatibility protein HMSD variant form (HMSD) from Homo sapiens (Human).